We begin with the raw amino-acid sequence, 760 residues long: Xaa-Pro dipeptidyl-peptidase (760 aa).

Catalysis depends on charge relay system residues S349, D469, and H499.

Belongs to the peptidase S15 family. As to quaternary structure, homodimer.

It localises to the cytoplasm. It carries out the reaction Hydrolyzes Xaa-Pro-|- bonds to release unblocked, N-terminal dipeptides from substrates including Ala-Pro-|-p-nitroanilide and (sequentially) Tyr-Pro-|-Phe-Pro-|-Gly-Pro-|-Ile.. In terms of biological role, removes N-terminal dipeptides sequentially from polypeptides having unsubstituted N-termini provided that the penultimate residue is proline. This chain is Xaa-Pro dipeptidyl-peptidase, found in Streptococcus pyogenes serotype M12 (strain MGAS9429).